The primary structure comprises 259 residues: Deoxyribose-phosphate aldolase (259 aa).

Residue aspartate 102 is the Proton donor/acceptor of the active site. The active-site Schiff-base intermediate with acetaldehyde is the lysine 167. The active-site Proton donor/acceptor is the lysine 201.

Belongs to the DeoC/FbaB aldolase family. DeoC type 2 subfamily.

It localises to the cytoplasm. It catalyses the reaction 2-deoxy-D-ribose 5-phosphate = D-glyceraldehyde 3-phosphate + acetaldehyde. The protein operates within carbohydrate degradation; 2-deoxy-D-ribose 1-phosphate degradation; D-glyceraldehyde 3-phosphate and acetaldehyde from 2-deoxy-alpha-D-ribose 1-phosphate: step 2/2. Catalyzes a reversible aldol reaction between acetaldehyde and D-glyceraldehyde 3-phosphate to generate 2-deoxy-D-ribose 5-phosphate. This is Deoxyribose-phosphate aldolase from Salmonella typhi.